A 327-amino-acid polypeptide reads, in one-letter code: Putative D-threonate 4-phosphate dehydrogenase (327 aa).

Substrate contacts are provided by His139 and Thr140. A divalent metal cation-binding residues include His169, His213, and His268. Residues Lys276, Asn285, and Arg294 each coordinate substrate.

The protein belongs to the PdxA family. PdxA2 subfamily. As to quaternary structure, homodimer. Requires a divalent metal cation as cofactor.

The enzyme catalyses 4-O-phospho-D-threonate + NAD(+) = dihydroxyacetone phosphate + CO2 + NADH. Catalyzes the NAD-dependent oxidation and subsequent decarboxylation of D-threonate 4-phosphate to produce dihydroxyacetone phosphate (DHAP). The polypeptide is Putative D-threonate 4-phosphate dehydrogenase (Salmonella typhi).